The chain runs to 155 residues: Large ribosomal subunit protein uL30 (155 aa).

It belongs to the universal ribosomal protein uL30 family. Part of the 50S ribosomal subunit.

The sequence is that of Large ribosomal subunit protein uL30 from Nitrosopumilus maritimus (strain SCM1).